The following is a 441-amino-acid chain: Putative collagenous domain-containing protein R238 (441 aa).

The Collagen-like domain maps to 164 to 199 (GCKGEKGIKGELGPKGNTGQKGDIGSKGDRGDKGEP). Positions 171–198 (IKGELGPKGNTGQKGDIGSKGDRGDKGE) are disordered. Basic and acidic residues predominate over residues 187–198 (IGSKGDRGDKGE).

This chain is Putative collagenous domain-containing protein R238, found in Acanthamoeba polyphaga (Amoeba).